The chain runs to 226 residues: UPF0173 metal-dependent hydrolase Fnod_0635 (226 aa).

Belongs to the UPF0173 family.

This Fervidobacterium nodosum (strain ATCC 35602 / DSM 5306 / Rt17-B1) protein is UPF0173 metal-dependent hydrolase Fnod_0635.